The sequence spans 293 residues: Elongation factor Ts (293 aa).

An involved in Mg(2+) ion dislocation from EF-Tu region spans residues 80–83 (TDFV).

It belongs to the EF-Ts family.

The protein localises to the cytoplasm. Functionally, associates with the EF-Tu.GDP complex and induces the exchange of GDP to GTP. It remains bound to the aminoacyl-tRNA.EF-Tu.GTP complex up to the GTP hydrolysis stage on the ribosome. The sequence is that of Elongation factor Ts from Aeromonas hydrophila subsp. hydrophila (strain ATCC 7966 / DSM 30187 / BCRC 13018 / CCUG 14551 / JCM 1027 / KCTC 2358 / NCIMB 9240 / NCTC 8049).